The following is a 205-amino-acid chain: ATP phosphoribosyltransferase (205 aa).

The protein belongs to the ATP phosphoribosyltransferase family. Short subfamily. In terms of assembly, heteromultimer composed of HisG and HisZ subunits.

It is found in the cytoplasm. The catalysed reaction is 1-(5-phospho-beta-D-ribosyl)-ATP + diphosphate = 5-phospho-alpha-D-ribose 1-diphosphate + ATP. The protein operates within amino-acid biosynthesis; L-histidine biosynthesis; L-histidine from 5-phospho-alpha-D-ribose 1-diphosphate: step 1/9. Functionally, catalyzes the condensation of ATP and 5-phosphoribose 1-diphosphate to form N'-(5'-phosphoribosyl)-ATP (PR-ATP). Has a crucial role in the pathway because the rate of histidine biosynthesis seems to be controlled primarily by regulation of HisG enzymatic activity. The chain is ATP phosphoribosyltransferase from Leptospira borgpetersenii serovar Hardjo-bovis (strain JB197).